We begin with the raw amino-acid sequence, 84 residues long: Large ribosomal subunit protein bL27 (84 aa).

The tract at residues 1-22 is disordered; that stretch reads MAHKKGASSTRNGRDSNAQRLG. The segment covering 7–19 has biased composition (polar residues); that stretch reads ASSTRNGRDSNAQ.

It belongs to the bacterial ribosomal protein bL27 family.

The sequence is that of Large ribosomal subunit protein bL27 from Streptomyces avermitilis (strain ATCC 31267 / DSM 46492 / JCM 5070 / NBRC 14893 / NCIMB 12804 / NRRL 8165 / MA-4680).